The sequence spans 79 residues: Conotoxin ArMSGL-0123 (79 aa).

Positions 1-20 (MSRLGIMVLTLLLLVFIVTS) are cleaved as a signal peptide. A propeptide spanning residues 21-44 (HQDAGEKQATKRAAVNFRWRRSFT) is cleaved from the precursor. 3 cysteine pairs are disulfide-bonded: cysteine 52-cysteine 64, cysteine 56-cysteine 73, and cysteine 63-cysteine 77. Position 78 is a leucine amide (leucine 78).

It belongs to the conotoxin O3 superfamily. Expressed by the venom duct.

Its subcellular location is the secreted. The chain is Conotoxin ArMSGL-0123 from Conus arenatus (Sand-dusted cone).